Consider the following 91-residue polypeptide: Non-specific lipid-transfer protein 1 (91 aa).

Disulfide bonds link Cys3/Cys50, Cys13/Cys27, Cys28/Cys73, and Cys48/Cys87.

Belongs to the plant LTP family.

Functionally, plant non-specific lipid-transfer proteins transfer phospholipids as well as galactolipids across membranes. May play a role in wax or cutin deposition in the cell walls of expanding epidermal cells and certain secretory tissues. This Prunus persica (Peach) protein is Non-specific lipid-transfer protein 1.